Here is a 113-residue protein sequence, read N- to C-terminus: Chaperone protein SigE (113 aa).

This sequence belongs to the IpgE/SigE chaperone family. Homodimer or higher-order oligomers.

The protein resides in the cytoplasm. Functionally, molecular chaperone required for SopB/SigD stabilization and secretion. The polypeptide is Chaperone protein SigE (sigE) (Salmonella paratyphi A (strain ATCC 9150 / SARB42)).